Consider the following 292-residue polypeptide: ATP synthase gamma chain (292 aa).

The protein belongs to the ATPase gamma chain family. As to quaternary structure, F-type ATPases have 2 components, CF(1) - the catalytic core - and CF(0) - the membrane proton channel. CF(1) has five subunits: alpha(3), beta(3), gamma(1), delta(1), epsilon(1). CF(0) has three main subunits: a, b and c.

It localises to the cell inner membrane. In terms of biological role, produces ATP from ADP in the presence of a proton gradient across the membrane. The gamma chain is believed to be important in regulating ATPase activity and the flow of protons through the CF(0) complex. In Hyphomonas neptunium (strain ATCC 15444), this protein is ATP synthase gamma chain.